The following is a 523-amino-acid chain: uncharacterized protein (523 aa).

The 255-residue stretch at 193 to 447 folds into the Radical SAM core domain; it reads RKCSGCGNCR…ALKRRMIGKR (255 aa). [4Fe-4S] cluster-binding residues include Cys212, Cys220, and Cys223.

[4Fe-4S] cluster is required as a cofactor.

This is an uncharacterized protein from Methanopyrus kandleri (strain AV19 / DSM 6324 / JCM 9639 / NBRC 100938).